Consider the following 953-residue polypeptide: Coatomer subunit beta (953 aa).

T2 is subject to N-acetylthreonine. 6 HEAT repeats span residues H96–E131, L132–N168, S240–T276, A277–H314, R316–V353, and D396–N433. At K494 the chain carries N6-acetyllysine.

In terms of assembly, oligomeric complex that consists of at least the alpha, beta, beta', gamma, delta, epsilon and zeta subunits. Interacts with SCYL1. Interacts with CAPN8. Interacts with COPG1. Interacts with ARF1 (myristoylated); this interaction is required for binding of COPB1 to Golgi membranes. Interacts (via trunk domain) with ARF1 (via switch I region); the interaction is direct. Interacts with KCNK2 (via N-terminus); this interaction increases the channel-mediated whole cell currents and promotes plasma membrane expression of KCNK2. Interacts with PRKCE. Interacts with STX17. Interacts with TMEM115. Interacts with TMEM41B. In terms of processing, proteolytically cleaved between Ser-528 and Ser-529 by CAPN8.

It is found in the cytoplasm. The protein resides in the golgi apparatus membrane. Its subcellular location is the cytoplasmic vesicle. The protein localises to the COPI-coated vesicle membrane. It localises to the cell membrane. It is found in the endoplasmic reticulum-Golgi intermediate compartment. The protein resides in the microsome membrane. Its function is as follows. The coatomer is a cytosolic protein complex that binds to dilysine motifs and reversibly associates with Golgi non-clathrin-coated vesicles, which further mediate biosynthetic protein transport from the ER, via the Golgi up to the trans Golgi network. Coatomer complex is required for budding from Golgi membranes, and is essential for the retrograde Golgi-to-ER transport of dilysine-tagged proteins. In mammals, the coatomer can only be recruited by membranes associated to ADP-ribosylation factors (ARFs), which are small GTP-binding proteins; the complex also influences the Golgi structural integrity, as well as the processing, activity, and endocytic recycling of LDL receptors. Involved in the Golgi disassembly and reassembly processes during cell cycle. Involved in autophagy by playing a role in early endosome function. Plays a role in organellar compartmentalization of secretory compartments including endoplasmic reticulum (ER)-Golgi intermediate compartment (ERGIC), Golgi, trans-Golgi network (TGN) and recycling endosomes, and in biosynthetic transport of CAV1. Plays a functional role in facilitating the transport of kappa-type opioid receptor mRNAs into axons and enhances translation of these proteins in the axonal compartment of dorsal root ganglion (DRG) cells. Required for limiting lipid storage in lipid droplets. Involved in lipid homeostasis by regulating the presence of perilipin family members PLIN2 and PLIN3 at the lipid droplet surface and promoting the association of adipocyte triglyceride lipase (PNPLA2) with the lipid droplet surface to mediate lipolysis. The protein is Coatomer subunit beta (Copb1) of Rattus norvegicus (Rat).